A 138-amino-acid chain; its full sequence is Large ribosomal subunit protein uL16 (138 aa).

It belongs to the universal ribosomal protein uL16 family. In terms of assembly, part of the 50S ribosomal subunit.

Binds 23S rRNA and is also seen to make contacts with the A and possibly P site tRNAs. This is Large ribosomal subunit protein uL16 from Anaeromyxobacter dehalogenans (strain 2CP-C).